The primary structure comprises 1597 residues: MDVTKKNKRDGSEVTERIITETVSTRLTSLPPKGGTSNGYAKTGSLSGGSRLEKHSLTHGSSGYINSSGSTRGNASTSSYRRAHSPASTLPNSPGSTFERKIHITRHGTYEGSSSGNSSPEYPRKEFASSSTRGRSQTRESEIRVRLQSASPSTRWTELDDVKRLLKGSRSASVSPTRNSSNTLPIPKKGTVETKMVTASSQSVSGTYDATILDANLPSHMWSSTLPAGSSMGTYHNNVTTQSSSLLNTNAYSAGSVFGVPNNMTSGSSTLHPGVSTCSSVFGMQNNLAPSSSTLSHSTATASTAYGMKKNLPQSPAVVSTGVSTSAACTTNVQNEDLLHKDCKFLILEKDNTPAKKEMELLIMTKDSGKVFTASPASIAATSFSDDTLKKEKQAAYTADTCLVSDANGDVKTVSTKGKAASAEMHNYNHRGGGSGGGGGGGGGGGGGPWGAAPAWCPCGSCCSWWKWLLGLLLTWLLLLGLLFGLIALAEEVRALKARVAELEQSRSNVLLFKEEMQRANKDWLQGEAPSVEAGGKLGLDGHQQEELWLFVRNRLMAEQENGNLRGSPGPKGDMGSQGPKGDRGLPGTPGIPGVLGHPGPQGPKGQKGSVGEPGMEGPMGQRGREGPMGPRGEPGPPGFGEKGDRGAAGEPGVQGPPGVPGSVGPKGSGGSPGPRGPPGPMGPQGLRGEVGLPGIKGDKGPLGSPGPKGDQGEKGPRGLTGEPGLRGLPGAVGEPGAKGAVGPAGPDGHQGPRGEQGLTGMPGTRGPPGPSGDPGKPGFTGPQGPQGLPGTPGRPGAKGEPGAPGRIMTSEGSSTITVPGPPGPPGAMGPPGPPGAPGPRGERGLAGESFMGSSSSISELLSTRSFKEPMQTCHRASFLEARVAKTTPALSGRHCVLDTCRKGVDLRGPPGPPGPPGPPDLPFRVRQDPEAPQVKAELPGKRYESIGTQSLGLALGKSLPATSPQHRVLETYFSGPPGPPGPPGPKGDQGSSSLGLNLQGPPGPRGPKGDKGGSSSSTMFMPGPPGPPGPPGPPGSISSSGREIQQYISEYLQSDSIRSYLSGVQGPPGPPGPPGPVTTIAGETFDYSELASRVSSYLQTSGYSIGSSVSISTEDIVAALQREYLRRAGGWEPWGLGLPLPELLRASEEALVLVPSGQGRPGCGRAVAREPCGLGGPTPALPVLAGDDVRQYLRQYVIGDWSLQSLDYAELSSRILSYMSSSGISIGLPGPPGPPGLPGTSYEELLSLLQGSEYRGIIGPPGPPGPPGIPGNAWSSISVEDLSSYLHTAGVSSIPGPPGPPGPPGPRGPPGVSGALATYAAENSDSFRSELISYLTSPDVRSFIVGPPGPPGPQGPPGDSRLVSMDGSYSRDSRSSSHSASVSRGSSYSSSMGIGGASGGSLGEAGAFGLDMGLGRGYGGAAEGGMYGGEGGPLGAGFAGGLDYNELAVRVSESLQRQGLLQGMAYTVQGPPGQPGPQGPPGISKVFSAYSNVTEDLMDFFRSKSTSVIVFLTPCCPVRGALQDHQVGLGHPALEGTREKKETKVTKSMRGGEREASPSSHELPLEEQPLASVLAMAYGVHVKISPKGGSWRLTSY.

Disordered regions lie at residues 1 to 155 and 168 to 188; these read MDVT…PSTR and GSRS…PIPK. Topologically, residues 1–468 are cytoplasmic; it reads MDVTKKNKRD…CGSCCSWWKW (468 aa). Positions 1 to 567 are nonhelical region (NC16A); sequence MDVTKKNKRD…AEQENGNLRG (567 aa). Residues 9–19 are compositionally biased toward basic and acidic residues; sequence RDGSEVTERII. Polar residues-rich tracts occupy residues 58–96, 111–120, and 170–184; these read THGS…SPGS, EGSSSGNSSP, and RSAS…SNTL. Residues 146-231 are necessary for interaction with DST and for the recruitment of DST to hemidesmosome; the sequence is RLQSASPSTR…WSSTLPAGSS (86 aa). A helical; Signal-anchor for type II membrane protein transmembrane segment spans residues 469–489; it reads LLGLLLTWLLLLGLLFGLIAL. Over 490 to 1597 the chain is Extracellular; the sequence is AEEVRALKAR…KGGSWRLTSY (1108 aa). Disordered regions lie at residues 562-857, 907-927, 970-1041, 1289-1316, and 1344-1394; these read NGNL…SSSS, LRGP…FRVR, LETY…ISSS, TAGV…VSGA, and FIVG…SSMG. A triple-helical region region spans residues 568–1572; sequence SPGPKGDMGS…ELPLEEQPLA (1005 aa). Residues 604–632 are compositionally biased toward low complexity; that stretch reads PKGQKGSVGEPGMEGPMGQRGREGPMGPR. Over residues 665–674 the composition is skewed to gly residues; sequence GPKGSGGSPG. Low complexity-rich tracts occupy residues 730-748 and 774-796; these read PGAV…AGPD and DPGK…PGRP. The segment covering 820 to 838 has biased composition (pro residues); it reads PGPPGPPGAMGPPGPPGAP. The span at 847 to 857 shows a compositional bias: low complexity; it reads AGESFMGSSSS. Pro residues-rich tracts occupy residues 910–922, 977–986, 1023–1035, 1296–1310, and 1348–1357; these read PPGP…PPDL, PPGPPGPPGP, PGPP…PGPP, PGPP…PRGP, and PPGPPGPQGP. Low complexity predominate over residues 1377–1393; the sequence is SSHSASVSRGSSYSSSM. Asn1493 carries an N-linked (GlcNAc...) asparagine glycan. The tract at residues 1531–1566 is disordered; sequence GHPALEGTREKKETKVTKSMRGGEREASPSSHELPL. A compositionally biased stretch (basic and acidic residues) spans 1537–1557; that stretch reads GTREKKETKVTKSMRGGEREA. A nonhelical region (NC1) region spans residues 1573–1597; sequence SVLAMAYGVHVKISPKGGSWRLTSY.

As to quaternary structure, homotrimers of alpha 1(XVII)chains. Interacts (via cytoplasmic region) with ITGB4 (via cytoplasmic region). Interacts (via cytoplasmic region) with DST (via N-terminus). Interacts (via N-terminus) with PLEC. Interacts (via cytoplasmic region) with DSP. Post-translationally, the intracellular/endo domain is disulfide-linked. Prolines at the third position of the tripeptide repeating unit (G-X-Y) are hydroxylated in some or all of the chains. In terms of processing, the ectodomain is shedded from the surface of keratinocytes resulting in a 120-kDa soluble form, also named as 120 kDa linear IgA disease antigen homolog. The shedding is mediated by membrane-bound metalloproteases. As to expression, upper lamina lucidalhemidesmosome.

Its subcellular location is the cell junction. It localises to the hemidesmosome. It is found in the membrane. The protein localises to the secreted. The protein resides in the extracellular space. Its subcellular location is the extracellular matrix. It localises to the basement membrane. In terms of biological role, the 120 kDa linear IgA disease antigen homolog is an anchoring filament component involved in dermal-epidermal cohesion. This Canis lupus familiaris (Dog) protein is Collagen alpha-1(XVII) chain (COL17A1).